Consider the following 144-residue polypeptide: Putative protein PHLOEM PROTEIN 2-LIKE B4 (144 aa).

The chain is Putative protein PHLOEM PROTEIN 2-LIKE B4 (PP2B4) from Arabidopsis thaliana (Mouse-ear cress).